A 69-amino-acid chain; its full sequence is Putative membrane protein insertion efficiency factor (69 aa).

Belongs to the UPF0161 family.

The protein resides in the cell inner membrane. Its function is as follows. Could be involved in insertion of integral membrane proteins into the membrane. In Nitrosomonas eutropha (strain DSM 101675 / C91 / Nm57), this protein is Putative membrane protein insertion efficiency factor.